Here is a 349-residue protein sequence, read N- to C-terminus: tRNA N6-adenosine threonylcarbamoyltransferase (349 aa).

Fe cation contacts are provided by histidine 118 and histidine 122. Residues 141-145 (LVSGG), aspartate 174, glycine 187, and asparagine 280 contribute to the substrate site. A Fe cation-binding site is contributed by aspartate 308.

Belongs to the KAE1 / TsaD family. Requires Fe(2+) as cofactor.

Its subcellular location is the cytoplasm. It catalyses the reaction L-threonylcarbamoyladenylate + adenosine(37) in tRNA = N(6)-L-threonylcarbamoyladenosine(37) in tRNA + AMP + H(+). Functionally, required for the formation of a threonylcarbamoyl group on adenosine at position 37 (t(6)A37) in tRNAs that read codons beginning with adenine. Is involved in the transfer of the threonylcarbamoyl moiety of threonylcarbamoyl-AMP (TC-AMP) to the N6 group of A37, together with TsaE and TsaB. TsaD likely plays a direct catalytic role in this reaction. The sequence is that of tRNA N6-adenosine threonylcarbamoyltransferase from Acidovorax sp. (strain JS42).